The chain runs to 170 residues: Peptide deformylase 2 (170 aa).

Residues Cys94 and His136 each contribute to the Fe cation site. Glu137 is an active-site residue. His140 is a binding site for Fe cation.

It belongs to the polypeptide deformylase family. Requires Fe(2+) as cofactor.

The enzyme catalyses N-terminal N-formyl-L-methionyl-[peptide] + H2O = N-terminal L-methionyl-[peptide] + formate. Removes the formyl group from the N-terminal Met of newly synthesized proteins. Requires at least a dipeptide for an efficient rate of reaction. N-terminal L-methionine is a prerequisite for activity but the enzyme has broad specificity at other positions. This is Peptide deformylase 2 from Xanthomonas axonopodis pv. citri (strain 306).